Here is a 147-residue protein sequence, read N- to C-terminus: RxLR effector protein Avr3a (147 aa).

A signal peptide spans 1 to 21 (MRLAIMLSATAVAINFATCSA). A RxLR-dEER motif is present at residues 44–59 (RLLRKNEENEETSEER). Lysine 48 carries the post-translational modification N6-acetyllysine. The effector domain stretch occupies residues 77-147 (ALTKRADAKK…YMMHLGLTGY (71 aa)).

Belongs to the RxLR effector family. Forms homodimers via the RxLR-dEER motif. Interacts with host E3 ligase CMPG1. Interacts with host DRP2. In terms of processing, proteolytically cleaved. The cleavage site directly after the RxLR sequence and the high conservation among other effector proteins suggest that the RxLR motif might play a crucial role in the intracellular processing before secretion. Glycosylated. Post-translationally, N-acetylated at Lys-48 after cleavage.

The protein resides in the secreted. Its subcellular location is the host cytoplasm. It localises to the host endosome. Functionally, multifunctional effector that can suppress host BAK1/SERK3-mediated immunity through at least two different pathways. Manipulates plant immunity by targeting and stabilizing host E3 ligase CMPG1. Preventing the normal 26S proteasome-dependent degradation of potato CMPG1, and thus potentially of its protein substrates in the host cell, further abolishes host cell death during the biotrophic phase of infection. Also associates with the dynamin-related protein 2 (DRP2), a plant GTPase involved in immune receptor-mediated endocytosis. The Avr3A(KI) form is recognized by R3a which triggers R3a-mediated hypersensitivity and suppresses INF1-induced cell death. This Phytophthora infestans (Potato late blight agent) protein is RxLR effector protein Avr3a.